A 680-amino-acid chain; its full sequence is Forkhead box protein P4 (680 aa).

The segment covering 1-17 (MMVESASETIRSAPSGQ) has biased composition (polar residues). Positions 1–56 (MMVESASETIRSAPSGQNGVGSLSGQADGSSGGATGTTASGTGREVTTGADSNGEM) are disordered. 2 positions are modified to phosphoserine: Ser52 and Ser86. Glycyl lysine isopeptide (Lys-Gly) (interchain with G-Cter in SUMO2) cross-links involve residues Lys175 and Lys246. The tract at residues 262–306 (FAAPPKVSPPLSHHTLPNGQPTVLTSRRDSSSHEETPGSHPLYGH) is disordered. Polar residues predominate over residues 276–286 (TLPNGQPTVLT). Residues 287–298 (SRRDSSSHEETP) show a composition bias toward basic and acidic residues. The C2H2-type zinc-finger motif lies at 307-332 (GECKWPGCETLCEDLGQFIKHLNTEH). Residues 349–370 (VQQLEIQLAKESERLQAMMAHL) form a leucine-zipper region. Lys378 participates in a covalent cross-link: Glycyl lysine isopeptide (Lys-Gly) (interchain with G-Cter in SUMO2). The tract at residues 407–445 (GLVHPPTSAAAPVTPLRPPGLGSASLHGGGPARRRSSDK) is disordered. The fork-head DNA-binding region spans 467 to 559 (RPPFTYASLI…KMTGSPTLVK (93 aa)). At Ser554 the chain carries Phosphoserine. Residues 602-680 (PLSHDDVGAP…EEELPGEELS (79 aa)) form a disordered region. Positions 617-635 (SNGSSSPPRLSPPQYSHQV) are enriched in polar residues. Residues 668–680 (RDLEEELPGEELS) are compositionally biased toward acidic residues.

In terms of assembly, forms homodimers and heterodimers with FOXP1 and FOXP2. Dimerization is required for DNA-binding.

Its subcellular location is the nucleus. Its function is as follows. Transcriptional repressor that represses lung-specific expression. The chain is Forkhead box protein P4 (FOXP4) from Homo sapiens (Human).